A 531-amino-acid polypeptide reads, in one-letter code: Peptide chain release factor 3 (531 aa).

A tr-type G domain is found at 10 to 278 (RRRRTFAIIS…SLIEWAPAPK (269 aa)). GTP-binding positions include 19–26 (SHPDAGKT), 87–91 (DTPGH), and 141–144 (NKYD).

It belongs to the TRAFAC class translation factor GTPase superfamily. Classic translation factor GTPase family. PrfC subfamily.

The protein localises to the cytoplasm. In terms of biological role, increases the formation of ribosomal termination complexes and stimulates activities of RF-1 and RF-2. It binds guanine nucleotides and has strong preference for UGA stop codons. It may interact directly with the ribosome. The stimulation of RF-1 and RF-2 is significantly reduced by GTP and GDP, but not by GMP. The polypeptide is Peptide chain release factor 3 (Neisseria meningitidis serogroup A / serotype 4A (strain DSM 15465 / Z2491)).